Here is a 473-residue protein sequence, read N- to C-terminus: Argininosuccinate lyase (473 aa).

It belongs to the lyase 1 family. Argininosuccinate lyase subfamily.

The protein localises to the cytoplasm. The enzyme catalyses 2-(N(omega)-L-arginino)succinate = fumarate + L-arginine. Its pathway is amino-acid biosynthesis; L-arginine biosynthesis; L-arginine from L-ornithine and carbamoyl phosphate: step 3/3. The sequence is that of Argininosuccinate lyase from Mycobacteroides abscessus (strain ATCC 19977 / DSM 44196 / CCUG 20993 / CIP 104536 / JCM 13569 / NCTC 13031 / TMC 1543 / L948) (Mycobacterium abscessus).